A 326-amino-acid chain; its full sequence is Tetraacyldisaccharide 4'-kinase (326 aa).

ATP is bound at residue 53–60 (SVGGNGKT).

It belongs to the LpxK family.

The catalysed reaction is a lipid A disaccharide + ATP = a lipid IVA + ADP + H(+). It functions in the pathway glycolipid biosynthesis; lipid IV(A) biosynthesis; lipid IV(A) from (3R)-3-hydroxytetradecanoyl-[acyl-carrier-protein] and UDP-N-acetyl-alpha-D-glucosamine: step 6/6. Transfers the gamma-phosphate of ATP to the 4'-position of a tetraacyldisaccharide 1-phosphate intermediate (termed DS-1-P) to form tetraacyldisaccharide 1,4'-bis-phosphate (lipid IVA). This is Tetraacyldisaccharide 4'-kinase from Actinobacillus pleuropneumoniae serotype 5b (strain L20).